We begin with the raw amino-acid sequence, 524 residues long: Putative ribose/galactose/methyl galactoside import ATP-binding protein 1 (524 aa).

ABC transporter domains are found at residues 35-271 (LEVR…VGRE) and 281-520 (VPIG…RIMD). 67–74 (GENGAGKS) serves as a coordination point for ATP.

Belongs to the ABC transporter superfamily. Carbohydrate importer 2 (CUT2) (TC 3.A.1.2) family.

The protein localises to the cell inner membrane. The enzyme catalyses D-ribose(out) + ATP + H2O = D-ribose(in) + ADP + phosphate + H(+). The catalysed reaction is D-galactose(out) + ATP + H2O = D-galactose(in) + ADP + phosphate + H(+). Functionally, part of an ABC transporter complex involved in carbohydrate import. Could be involved in ribose, galactose and/or methyl galactoside import. Responsible for energy coupling to the transport system. In Burkholderia cenocepacia (strain HI2424), this protein is Putative ribose/galactose/methyl galactoside import ATP-binding protein 1.